Consider the following 388-residue polypeptide: Alcohol dehydrogenase patD (388 aa).

Cysteine 46 is a Zn(2+) binding site. Residue histidine 47 coordinates NAD(+). Histidine 67, glutamate 68, cysteine 101, cysteine 104, and cysteine 112 together coordinate Zn(2+). Histidine 67 contributes to the substrate binding site. NAD(+) is bound by residues 198-203, 295-297, and 320-322; these read VALSRG, SLL, and EEA.

This sequence belongs to the zinc-containing alcohol dehydrogenase family. The cofactor is Zn(2+).

Its subcellular location is the cytoplasm. The protein resides in the cytosol. The enzyme catalyses neopatulin + NADPH + H(+) = (E)-ascladiol + NADP(+). Its pathway is mycotoxin biosynthesis; patulin biosynthesis. Alcohol dehydrogenase; part of the gene cluster that mediates the biosynthesis of patulin, an acetate-derived tetraketide mycotoxin produced by several fungal species that shows antimicrobial properties against several bacteria. PatD catalyzes the conversion of neopatulin into E-ascladiol. The pathway begins with the synthesis of 6-methylsalicylic acid by the polyketide synthase (PKS) patK via condensation of acetate and malonate units. The 6-methylsalicylic acid decarboxylase patG then catalyzes the decarboxylation of 6-methylsalicylic acid to yield m-cresol (also known as 3-methylphenol). These first reactions occur in the cytosol. The intermediate m-cresol is then transported into the endoplasmic reticulum where the cytochrome P450 monooxygenase patH converts it to m-hydroxybenzyl alcohol, which is further converted to gentisyl alcohol by the cytochrome P450 monooxygenase patI. The oxidoreductases patJ and patO further convert gentisyl alcohol to isoepoxydon in the vacuole. PatN catalyzes then the transformation of isoepoxydon into phyllostine. The cluster protein patF is responsible for the conversion from phyllostine to neopatulin whereas the alcohol dehydrogenase patD converts neopatulin to E-ascladiol. The steps between isoepoxydon and E-ascladiol occur in the cytosol, and E-ascladiol is probably secreted to the extracellular space by one of the cluster-specific transporters patC or patM. Finally, the secreted patulin synthase patE catalyzes the conversion of E-ascladiol to patulin. The protein is Alcohol dehydrogenase patD of Aspergillus clavatus (strain ATCC 1007 / CBS 513.65 / DSM 816 / NCTC 3887 / NRRL 1 / QM 1276 / 107).